A 475-amino-acid chain; its full sequence is UDP-N-acetylmuramate--L-alanine ligase (475 aa).

121–127 lines the ATP pocket; the sequence is GTHGKTT.

This sequence belongs to the MurCDEF family.

The protein resides in the cytoplasm. The enzyme catalyses UDP-N-acetyl-alpha-D-muramate + L-alanine + ATP = UDP-N-acetyl-alpha-D-muramoyl-L-alanine + ADP + phosphate + H(+). It participates in cell wall biogenesis; peptidoglycan biosynthesis. In terms of biological role, cell wall formation. The polypeptide is UDP-N-acetylmuramate--L-alanine ligase (Salinibacter ruber (strain DSM 13855 / M31)).